The primary structure comprises 552 residues: Capsid protein precursor (552 aa).

The segment at 1 to 41 is disordered; sequence MKQNDTKKTTQRRNSKKYSSKTNRGTKRAPRDQEVGTGAQE. Residues 9–28 are compositionally biased toward basic residues; it reads TTQRRNSKKYSSKTNRGTKR.

As to quaternary structure, homodimer. Post-translationally, the 7 kDa polypeptide is acetylated. In terms of processing, autocatalytic proteolysis releases a post-translationally modified peptide that remains associated with nucleic acid within the virion. This peptide is observed only when nucleic acid is packaged in the capsid.

Its subcellular location is the virion. Its function is as follows. The capsid protein self-assembles to form an icosahedral capsid with a T=2 symmetry made of 120 subunits. The chain is Capsid protein precursor (Segment-1) from Human picobirnavirus (strain Human/Thailand/Hy005102/-) (PBV).